Here is a 590-residue protein sequence, read N- to C-terminus: Cationic amino acid transporter 8, vacuolar (590 aa).

Over 1 to 85 the chain is Cytoplasmic; that stretch reads MIPASMEEAH…ESENPMRRCL (85 aa). The helical transmembrane segment at 86–106 threads the bilayer; sequence TWWDLLWLSFGSVVGSGVFVI. The Vacuolar portion of the chain corresponds to 107-114; the sequence is TGQEARVG. Residues 115–135 traverse the membrane as a helical segment; the sequence is AGPAVVLSYAISGVSALLSVL. The Cytoplasmic segment spans residues 136-160; the sequence is CYAEFGVEIPVAGGSFSYLRVELGD. The helical transmembrane segment at 161-181 threads the bilayer; that stretch reads FIAFIAAGNILLEAMVGAAGL. Over 182–209 the chain is Vacuolar; the sequence is GRSWSSYLASLVKNDSDYFRIKVDSFAK. A glycan (N-linked (GlcNAc...) asparagine) is linked at Asn195. A helical membrane pass occupies residues 210 to 230; it reads GFDLLDPVAVAVLLVANGIAM. Over 231–238 the chain is Cytoplasmic; it reads TGTKRTSW. The chain crosses the membrane as a helical span at residues 239–259; that stretch reads LNLITSMVTVCIIVFIVVVGF. At 260 to 266 the chain is on the vacuolar side; the sequence is THSKTSN. Residues 267 to 287 form a helical membrane-spanning segment; that stretch reads LVPFFPYGAKGVVQSAAVVYW. At 288-310 the chain is on the cytoplasmic side; sequence SYTGFDMVANMAEETEKPSRDIP. The chain crosses the membrane as a helical span at residues 311–331; it reads IGLVGSMSMITVVYCLMALAL. Topologically, residues 332–359 are vacuolar; the sequence is TMMVKYTEIDANAAYSVAFAQIGMKWAK. A helical membrane pass occupies residues 360-380; that stretch reads YLVGICALKGMTTSLLVGSLG. The Cytoplasmic segment spans residues 381 to 407; that stretch reads QARYTTQIARSHMIPPWFALVHPKTGT. Residues 408–428 traverse the membrane as a helical segment; it reads PIYATLLVTILSSIISFFTSL. A topological domain (vacuolar) is located at residue Glu429. The helical transmembrane segment at 430–450 threads the bilayer; sequence VLSSVFSFATLFIFMLVAVAL. Residues 451–465 are Cytoplasmic-facing; it reads LVRRYYVKDVTPEAG. The chain crosses the membrane as a helical span at residues 466 to 486; the sequence is LLKFLGFLFLIIASSIGVSAL. At 487–493 the chain is on the vacuolar side; the sequence is WNSGVKG. The chain crosses the membrane as a helical span at residues 494-514; sequence WIAYTVTGVIWFIGTLGLALL. At 515 to 522 the chain is on the cytoplasmic side; sequence PKYRVPKV. Residues 523–543 form a helical membrane-spanning segment; the sequence is WGVPLVPWLPSFSIAMNLFLI. The Vacuolar segment spans residues 544–553; that stretch reads GSLGYVAFLR. Residues 554 to 574 form a helical membrane-spanning segment; the sequence is FIICTMVMLLYYLFVGLHATY. Topologically, residues 575–590 are cytoplasmic; sequence DVAHQPLEEAKFEGER.

This sequence belongs to the amino acid-polyamine-organocation (APC) superfamily. Cationic amino acid transporter (CAT) (TC 2.A.3.3) family. In terms of tissue distribution, expressed in roots, stems, flowers and leaves. Mostly present in young and rapidly dividing tissues such as the shoot and root apical meristem, and in young leaves and petioles during seedling development.

It is found in the cell membrane. Permease involved in the transport of the cationic neutral or acidic amino acids. This chain is Cationic amino acid transporter 8, vacuolar (CAT8), found in Arabidopsis thaliana (Mouse-ear cress).